Consider the following 367-residue polypeptide: Phospho-N-acetylmuramoyl-pentapeptide-transferase (367 aa).

The next 10 membrane-spanning stretches (helical) occupy residues alanine 30 to leucine 50, leucine 71 to alanine 91, threonine 94 to isoleucine 114, isoleucine 138 to methionine 158, leucine 169 to serine 189, glycine 200 to alanine 220, glycine 237 to phenylalanine 257, isoleucine 264 to leucine 284, leucine 289 to valine 309, and lysine 344 to leucine 364.

It belongs to the glycosyltransferase 4 family. MraY subfamily. Mg(2+) is required as a cofactor.

The protein resides in the cell inner membrane. The catalysed reaction is UDP-N-acetyl-alpha-D-muramoyl-L-alanyl-gamma-D-glutamyl-meso-2,6-diaminopimeloyl-D-alanyl-D-alanine + di-trans,octa-cis-undecaprenyl phosphate = di-trans,octa-cis-undecaprenyl diphospho-N-acetyl-alpha-D-muramoyl-L-alanyl-D-glutamyl-meso-2,6-diaminopimeloyl-D-alanyl-D-alanine + UMP. Its pathway is cell wall biogenesis; peptidoglycan biosynthesis. Catalyzes the initial step of the lipid cycle reactions in the biosynthesis of the cell wall peptidoglycan: transfers peptidoglycan precursor phospho-MurNAc-pentapeptide from UDP-MurNAc-pentapeptide onto the lipid carrier undecaprenyl phosphate, yielding undecaprenyl-pyrophosphoryl-MurNAc-pentapeptide, known as lipid I. The sequence is that of Phospho-N-acetylmuramoyl-pentapeptide-transferase from Chlorobium phaeovibrioides (strain DSM 265 / 1930) (Prosthecochloris vibrioformis (strain DSM 265)).